A 551-amino-acid polypeptide reads, in one-letter code: MEEEVPGFYGESGKSVQATLSSLKMLDVGKWPIFSLCSEEELQLIRQACVFGTAGNEVLYTTVNDEIFVLGTNCSGCLGVGDIQSTIEPRRLDSLTGKKIASLSYGSGPHIVLATTDGEVFTWGHNAYSQLGNGTTNHGLVPCHISTNLSNKQVIEVACGSYHSLVLTSDGEVFAWGYNNSGQVGSGSTANQPIPRRVTGCLQNKVVMSIACGQMCSMAVVDTGEVYVWGYNGNGQLGLGSSGNQPTPCRVAALQGIRVQRVACGYAHTLVLTDEGQIYAWGANSYGQLGTGNKSNQSYPTPVVVEKDRIIEIAACHSAHTSAAKSQGGHVYMWGQCRGQSVILPHLTHFCCTDDVFACFATPAVTWRLLSVEPDDHLTVAESLKREFDNPDTADLKFLVDGKYIYAHKVLLKIRCEHFRSSLEDSEDDIVEMSEFSYPVFRAFLEYLYTDNISLPPEEAVGLLDLATFYSETRLKKLCQQTIKQGICEENAIALLSAAVKYDAQDLEEFCFRFCINHLTVVTQTSGFAEMDHDLLKNFISKASRVGAFKN.

6 RCC1 repeats span residues 64–115 (NDEI…VLAT), 117–169 (DGEV…VLTS), 171–222 (GEVF…AVVD), 223–274 (TGEV…VLTD), 276–326 (GQIY…AAKS), and 328–382 (GGHV…TVAE). The 64-residue stretch at 394 to 457 (ADLKFLVDGK…LYTDNISLPP (64 aa)) folds into the BTB domain.

The protein localises to the cytoplasmic vesicle. Its subcellular location is the secretory vesicle. It localises to the acrosome. In Rattus norvegicus (Rat), this protein is RCC1 and BTB domain-containing protein 2 (Rcbtb2).